Reading from the N-terminus, the 255-residue chain is Lactose phosphotransferase system repressor (255 aa).

One can recognise an HTH deoR-type domain in the interval 3-58 (KKRRLEKILDMLKIDGTITIKEIIDELDISDMTARRDLDALEADGLLTRTHGGAQL). Residues 20-39 (ITIKEIIDELDISDMTARRD) constitute a DNA-binding region (H-T-H motif).

Repressor of the lactose catabolism operon. Galactose-6-phosphate is the inducer. In Lactococcus lactis subsp. lactis (Streptococcus lactis), this protein is Lactose phosphotransferase system repressor (lacR).